Here is a 206-residue protein sequence, read N- to C-terminus: Small ribosomal subunit protein uS4 (206 aa).

In terms of domain architecture, S4 RNA-binding spans 98 to 164; that stretch reads MRLDNVVYRL…EKFKTFIENP (67 aa).

It belongs to the universal ribosomal protein uS4 family. As to quaternary structure, part of the 30S ribosomal subunit. Contacts protein S5. The interaction surface between S4 and S5 is involved in control of translational fidelity.

In terms of biological role, one of the primary rRNA binding proteins, it binds directly to 16S rRNA where it nucleates assembly of the body of the 30S subunit. With S5 and S12 plays an important role in translational accuracy. This chain is Small ribosomal subunit protein uS4, found in Clostridium tetani (strain Massachusetts / E88).